We begin with the raw amino-acid sequence, 434 residues long: Glutamate-1-semialdehyde 2,1-aminomutase (434 aa).

K273 is subject to N6-(pyridoxal phosphate)lysine.

Belongs to the class-III pyridoxal-phosphate-dependent aminotransferase family. HemL subfamily. In terms of assembly, homodimer. It depends on pyridoxal 5'-phosphate as a cofactor.

The protein localises to the cytoplasm. It carries out the reaction (S)-4-amino-5-oxopentanoate = 5-aminolevulinate. Its pathway is porphyrin-containing compound metabolism; protoporphyrin-IX biosynthesis; 5-aminolevulinate from L-glutamyl-tRNA(Glu): step 2/2. The polypeptide is Glutamate-1-semialdehyde 2,1-aminomutase (Polynucleobacter asymbioticus (strain DSM 18221 / CIP 109841 / QLW-P1DMWA-1) (Polynucleobacter necessarius subsp. asymbioticus)).